Here is a 269-residue protein sequence, read N- to C-terminus: Cytochrome c oxidase subunit 3 (269 aa).

The next 7 membrane-spanning stretches (helical) occupy residues 21–41, 45–65, 90–110, 138–160, 167–187, 205–225, and 247–267; these read PWPI…ALTM, IGHM…ATLW, GFLL…WAYF, PLLN…HGLV, ALSG…CQYI, FYAG…MLGI, and VLYC…FYWW.

This sequence belongs to the cytochrome c oxidase subunit 3 family. Component of the cytochrome c oxidase (complex IV, CIV), a multisubunit enzyme composed of a catalytic core of 3 subunits and several supernumerary subunits. The complex exists as a monomer or a dimer and forms supercomplexes (SCs) in the inner mitochondrial membrane with ubiquinol-cytochrome c oxidoreductase (cytochrome b-c1 complex, complex III, CIII).

It is found in the mitochondrion inner membrane. It catalyses the reaction 4 Fe(II)-[cytochrome c] + O2 + 8 H(+)(in) = 4 Fe(III)-[cytochrome c] + 2 H2O + 4 H(+)(out). Its function is as follows. Component of the cytochrome c oxidase, the last enzyme in the mitochondrial electron transport chain which drives oxidative phosphorylation. The respiratory chain contains 3 multisubunit complexes succinate dehydrogenase (complex II, CII), ubiquinol-cytochrome c oxidoreductase (cytochrome b-c1 complex, complex III, CIII) and cytochrome c oxidase (complex IV, CIV), that cooperate to transfer electrons derived from NADH and succinate to molecular oxygen, creating an electrochemical gradient over the inner membrane that drives transmembrane transport and the ATP synthase. Cytochrome c oxidase is the component of the respiratory chain that catalyzes the reduction of oxygen to water. Electrons originating from reduced cytochrome c in the intermembrane space (IMS) are transferred via the dinuclear copper A center (CU(A)) of subunit 2 and heme A of subunit 1 to the active site in subunit 1, a binuclear center (BNC) formed by heme A3 and copper B (CU(B)). The BNC reduces molecular oxygen to 2 water molecules using 4 electrons from cytochrome c in the IMS and 4 protons from the mitochondrial matrix. In Kluyveromyces lactis (strain ATCC 8585 / CBS 2359 / DSM 70799 / NBRC 1267 / NRRL Y-1140 / WM37) (Yeast), this protein is Cytochrome c oxidase subunit 3 (COX3).